A 457-amino-acid chain; its full sequence is Serine--tRNA ligase (457 aa).

252–254 lines the L-serine pocket; that stretch reads TAE. ATP is bound by residues 283–285 and V299; that span reads RKE. Residue E306 participates in L-serine binding. ATP is bound at residue 370–373; that stretch reads EMVS. T406 provides a ligand contact to L-serine.

This sequence belongs to the class-II aminoacyl-tRNA synthetase family. Type-1 seryl-tRNA synthetase subfamily. As to quaternary structure, homodimer. The tRNA molecule binds across the dimer.

It is found in the cytoplasm. The enzyme catalyses tRNA(Ser) + L-serine + ATP = L-seryl-tRNA(Ser) + AMP + diphosphate + H(+). It carries out the reaction tRNA(Sec) + L-serine + ATP = L-seryl-tRNA(Sec) + AMP + diphosphate + H(+). It participates in aminoacyl-tRNA biosynthesis; selenocysteinyl-tRNA(Sec) biosynthesis; L-seryl-tRNA(Sec) from L-serine and tRNA(Sec): step 1/1. Functionally, catalyzes the attachment of serine to tRNA(Ser). Is also able to aminoacylate tRNA(Sec) with serine, to form the misacylated tRNA L-seryl-tRNA(Sec), which will be further converted into selenocysteinyl-tRNA(Sec). The protein is Serine--tRNA ligase of Saccharolobus islandicus (strain M.14.25 / Kamchatka #1) (Sulfolobus islandicus).